A 357-amino-acid polypeptide reads, in one-letter code: U5 small nuclear ribonucleoprotein 40 kDa protein (357 aa).

Residue Lys18 forms a Glycyl lysine isopeptide (Lys-Gly) (interchain with G-Cter in SUMO2) linkage. Arg21 bears the Asymmetric dimethylarginine mark. WD repeat units follow at residues 64-103 (GHEG…DNYA), 107-146 (GHSG…RVKR), 149-189 (GHTS…AIQT), 191-230 (QNTY…LTYT), 233-272 (GHAD…PKER), 283-322 (NFEK…ILYK), and 325-357 (GHAG…GEIQ). Lys270 is covalently cross-linked (Glycyl lysine isopeptide (Lys-Gly) (interchain with G-Cter in SUMO2)).

As to quaternary structure, component of the pre-catalytic and catalytic spliceosome complexes. Component of the postcatalytic spliceosome P complex. Part of the U5 snRNP complex. Interacts with PRPF8. Component of the U4/U6-U5 tri-snRNP complex composed of the U4, U6 and U5 snRNAs and at least PRPF3, PRPF4, PRPF6, PRPF8, PRPF31, SNRNP200, TXNL4A, WDR57, SNRNP40, DDX23, CD2BP2, PPIH, SNU13, EFTUD2, SART1 and USP39. Component of the minor spliceosome, which splices U12-type introns.

It is found in the nucleus. Its function is as follows. Required for pre-mRNA splicing as component of the activated spliceosome. Component of the U5 small nuclear ribonucleoprotein (snRNP) complex and the U4/U6-U5 tri-snRNP complex, building blocks of the spliceosome. As a component of the minor spliceosome, involved in the splicing of U12-type introns in pre-mRNAs. This Homo sapiens (Human) protein is U5 small nuclear ribonucleoprotein 40 kDa protein (SNRNP40).